Reading from the N-terminus, the 139-residue chain is Large ribosomal subunit protein bL17 (139 aa).

The protein belongs to the bacterial ribosomal protein bL17 family. In terms of assembly, part of the 50S ribosomal subunit. Contacts protein L32.

In Cereibacter sphaeroides (strain ATCC 17029 / ATH 2.4.9) (Rhodobacter sphaeroides), this protein is Large ribosomal subunit protein bL17.